The following is a 75-amino-acid chain: Exodeoxyribonuclease 7 small subunit (75 aa).

This sequence belongs to the XseB family. Heterooligomer composed of large and small subunits.

The protein resides in the cytoplasm. The catalysed reaction is Exonucleolytic cleavage in either 5'- to 3'- or 3'- to 5'-direction to yield nucleoside 5'-phosphates.. Functionally, bidirectionally degrades single-stranded DNA into large acid-insoluble oligonucleotides, which are then degraded further into small acid-soluble oligonucleotides. The sequence is that of Exodeoxyribonuclease 7 small subunit from Citrifermentans bemidjiense (strain ATCC BAA-1014 / DSM 16622 / JCM 12645 / Bem) (Geobacter bemidjiensis).